The sequence spans 482 residues: Dual specificity protein phosphatase 10 (482 aa).

Residues 168 to 285 enclose the Rhodanese domain; that stretch reads PSQGPVIIDC…FKQNHENLCD (118 aa). The segment at 199–215 is interaction with MAP kinases; that stretch reads KISRRRLQQGKITVLDL. The Tyrosine-protein phosphatase domain occupies 321–464; that stretch reads ELTPILPFLF…LLEFEEDLNN (144 aa). Cys-408 (phosphocysteine intermediate) is an active-site residue.

It belongs to the protein-tyrosine phosphatase family. Non-receptor class dual specificity subfamily. In terms of assembly, monomer. Interacts with MAPK14.

Its subcellular location is the cytoplasm. It localises to the nucleus. The enzyme catalyses O-phospho-L-tyrosyl-[protein] + H2O = L-tyrosyl-[protein] + phosphate. It catalyses the reaction O-phospho-L-seryl-[protein] + H2O = L-seryl-[protein] + phosphate. It carries out the reaction O-phospho-L-threonyl-[protein] + H2O = L-threonyl-[protein] + phosphate. In terms of biological role, protein phosphatase involved in the inactivation of MAP kinases. Has a specificity for the MAPK11/MAPK12/MAPK13/MAPK14 subfamily. It preferably dephosphorylates p38. This chain is Dual specificity protein phosphatase 10 (DUSP10), found in Bos taurus (Bovine).